Reading from the N-terminus, the 130-residue chain is Hypocretin neuropeptide precursor (130 aa).

Residues M1–A32 form the signal peptide. Pyrrolidone carboxylic acid is present on Q33. Cystine bridges form between C38/C44 and C39/C46. L65 is subject to Leucine amide. The residue at position 96 (M96) is a Methionine amide. Positions G97–V130 are cleaved as a propeptide — removed in mature form.

Belongs to the orexin family. Specific enzymatic cleavages at paired basic residues yield the different active peptides.

The protein resides in the rough endoplasmic reticulum. The protein localises to the cytoplasmic vesicle. It localises to the synapse. In terms of biological role, neuropeptides that play a significant role in the regulation of food intake and sleep-wakefulness, possibly by coordinating the complex behavioral and physiologic responses of these complementary homeostatic functions. A broader role in the homeostatic regulation of energy metabolism, autonomic function, hormonal balance and the regulation of body fluids, is also suggested. Its function is as follows. Binds to orexin receptors HCRTR1/OX1R and HCRTR2/OX2R with a high affinity. Stimulates food intake. Modulates pituitary luteinizing hormone secretion in an ovarian steroid-dependent manner. Functionally, binds to orexin receptor HCRTR2/OX2R only. Stimulates food intake. Modulates pituitary luteinizing hormone secretion in an ovarian steroid-dependent manner. In Canis lupus familiaris (Dog), this protein is Hypocretin neuropeptide precursor (HCRT).